The sequence spans 229 residues: Uridylate cyclase (229 aa).

Residues 47 to 178 (TVLYADLDGS…RAANYAAKLT (132 aa)) enclose the Guanylate cyclase domain. Residue Y50 participates in a ribonucleoside 5'-triphosphate binding. Residues D52 and D96 each contribute to the Mn(2+) site. R97 contributes to the a ribonucleoside 5'-triphosphate binding site.

It belongs to the adenylyl cyclase class-4/guanylyl cyclase family. Pyrimidine cyclase subfamily. Homodimer. The cofactor is Mn(2+).

It is found in the cytoplasm. The catalysed reaction is UTP = 3',5'-cyclic UMP + diphosphate. In terms of biological role, pycsar (pyrimidine cyclase system for antiphage resistance) provides immunity against bacteriophage. The pyrimidine cyclase (PycC) synthesizes cyclic nucleotides in response to infection; these serve as specific second messenger signals. The signals activate the adjacent effector, leading to bacterial cell death and abortive phage infection. A clade B Pycsar system. Functionally, the pyrimidine cyclase gene of a two-gene Pycsar system, generates cyclic UMP (cUMP) from UTP, has little to no activity on ATP, CTP or GTP. Expression of this and adjacent effector BcPycTIR (AC A0A0J5WTU0) probably confers resistance to bacteriophage. The genes are probably only expressed in response to bacteriophage infection. The chain is Uridylate cyclase from Burkholderia cepacia (Pseudomonas cepacia).